The following is a 201-amino-acid chain: uncharacterized protein (201 aa).

The first 25 residues, 1–25, serve as a signal peptide directing secretion; sequence MYRAGVTLLVVAVVSLGRWDVVTMA. Topologically, residues 26–170 are extracellular; that stretch reads AAIGIGWYEP…AYFRRSNHRA (145 aa). Asparagine 46, asparagine 49, asparagine 55, asparagine 84, asparagine 95, asparagine 113, asparagine 122, asparagine 137, and asparagine 144 each carry an N-linked (GlcNAc...) asparagine; by host glycan. The chain crosses the membrane as a helical span at residues 171–191; the sequence is FMIVILTQVVFVVFIINASFI. Topologically, residues 192–201 are cytoplasmic; that stretch reads WSWTFRRHKR.

This sequence belongs to the HHV-5 UL120 protein family.

The protein resides in the host membrane. This is an uncharacterized protein from Homo sapiens (Human).